Reading from the N-terminus, the 595-residue chain is Tripeptidyl-peptidase SED3 (595 aa).

An N-terminal signal peptide occupies residues 1–22; the sequence is MLLPWQQTIIILFLGVNSLVAA. The propeptide at 23 to 201 is removed in mature form; the sequence is LRNTYRTVEE…KLETIQLSSN (179 aa). Residues Asn-207, Asn-264, and Asn-278 are each glycosylated (N-linked (GlcNAc...) asparagine). Residues 209–595 form the Peptidase S53 domain; that stretch reads TITPQCLRDI…EILAKIVRDL (387 aa). Active-site charge relay system residues include Glu-285 and Asp-289. Asn-298 and Asn-365 each carry an N-linked (GlcNAc...) asparagine glycan. Catalysis depends on Ser-499, which acts as the Charge relay system. Residues Asp-541 and Ile-542 each coordinate Ca(2+). Residues Asn-554, Asn-557, and Asn-569 are each glycosylated (N-linked (GlcNAc...) asparagine). Ca(2+) is bound by residues Gly-573 and Asp-575.

Requires Ca(2+) as cofactor.

The protein localises to the secreted. It is found in the extracellular space. The enzyme catalyses Release of an N-terminal tripeptide from a polypeptide.. In terms of biological role, secreted tripeptidyl-peptidase which degrades proteins at acidic pHs and is involved in virulence. This is Tripeptidyl-peptidase SED3 (SED3) from Arthroderma otae (strain ATCC MYA-4605 / CBS 113480) (Microsporum canis).